The chain runs to 256 residues: Pimeloyl-[acyl-carrier protein] methyl ester esterase (256 aa).

An AB hydrolase-1 domain is found at 15 to 242; it reads HLVLLHGWGL…AAHAPFISHP (228 aa). Substrate-binding positions include Trp22, 82–83, and 143–147; these read SL and FLALQ. Ser82 (nucleophile) is an active-site residue. Residues Asp207 and His235 contribute to the active site. His235 provides a ligand contact to substrate.

It belongs to the AB hydrolase superfamily. Carboxylesterase BioH family. Monomer.

Its subcellular location is the cytoplasm. The catalysed reaction is 6-carboxyhexanoyl-[ACP] methyl ester + H2O = 6-carboxyhexanoyl-[ACP] + methanol + H(+). Its pathway is cofactor biosynthesis; biotin biosynthesis. Functionally, the physiological role of BioH is to remove the methyl group introduced by BioC when the pimeloyl moiety is complete. It allows to synthesize pimeloyl-ACP via the fatty acid synthetic pathway through the hydrolysis of the ester bonds of pimeloyl-ACP esters. The polypeptide is Pimeloyl-[acyl-carrier protein] methyl ester esterase (Escherichia coli O127:H6 (strain E2348/69 / EPEC)).